We begin with the raw amino-acid sequence, 270 residues long: tRNA (guanine-N(1)-)-methyltransferase (270 aa).

Residues Gly119 and 139-144 (IGDYVI) each bind S-adenosyl-L-methionine.

The protein belongs to the RNA methyltransferase TrmD family. Homodimer.

The protein resides in the cytoplasm. The catalysed reaction is guanosine(37) in tRNA + S-adenosyl-L-methionine = N(1)-methylguanosine(37) in tRNA + S-adenosyl-L-homocysteine + H(+). Functionally, specifically methylates guanosine-37 in various tRNAs. In Nitrosomonas europaea (strain ATCC 19718 / CIP 103999 / KCTC 2705 / NBRC 14298), this protein is tRNA (guanine-N(1)-)-methyltransferase.